The primary structure comprises 436 residues: UDP-N-acetylglucosamine 1-carboxyvinyltransferase 1 (436 aa).

Lys22 to Asn23 serves as a coordination point for phosphoenolpyruvate. UDP-N-acetyl-alpha-D-glucosamine is bound at residue Arg93. Cys117 acts as the Proton donor in catalysis. Residue Cys117 is modified to 2-(S-cysteinyl)pyruvic acid O-phosphothioketal. UDP-N-acetyl-alpha-D-glucosamine is bound by residues Arg122–Gln126, Asp306, and Val328.

This sequence belongs to the EPSP synthase family. MurA subfamily.

It localises to the cytoplasm. It carries out the reaction phosphoenolpyruvate + UDP-N-acetyl-alpha-D-glucosamine = UDP-N-acetyl-3-O-(1-carboxyvinyl)-alpha-D-glucosamine + phosphate. It functions in the pathway cell wall biogenesis; peptidoglycan biosynthesis. Its function is as follows. Cell wall formation. Adds enolpyruvyl to UDP-N-acetylglucosamine. Essential for cell growth. The sequence is that of UDP-N-acetylglucosamine 1-carboxyvinyltransferase 1 from Bacillus subtilis (strain 168).